The following is a 195-amino-acid chain: Probable GTP-binding protein EngB (195 aa).

One can recognise an EngB-type G domain in the interval 22–194 (LKGEVAFVGR…LDLISTLLKE (173 aa)). GTP is bound by residues 30–37 (GRSNVGKS), 56–60 (GKTRS), 74–77 (DLPG), 141–144 (TKMD), and 173–175 (TSS). 2 residues coordinate Mg(2+): S37 and T58.

The protein belongs to the TRAFAC class TrmE-Era-EngA-EngB-Septin-like GTPase superfamily. EngB GTPase family. The cofactor is Mg(2+).

In terms of biological role, necessary for normal cell division and for the maintenance of normal septation. In Thermotoga sp. (strain RQ2), this protein is Probable GTP-binding protein EngB.